We begin with the raw amino-acid sequence, 129 residues long: Small ribosomal subunit protein uS11 (129 aa).

Belongs to the universal ribosomal protein uS11 family. Part of the 30S ribosomal subunit. Interacts with proteins S7 and S18. Binds to IF-3.

Functionally, located on the platform of the 30S subunit, it bridges several disparate RNA helices of the 16S rRNA. Forms part of the Shine-Dalgarno cleft in the 70S ribosome. This chain is Small ribosomal subunit protein uS11, found in Hyphomonas neptunium (strain ATCC 15444).